Consider the following 820-residue polypeptide: Probable ATP-dependent RNA helicase DDX23 (820 aa).

The segment covering 1 to 42 has biased composition (basic and acidic residues); sequence MAGELADKKDRDASPSKEERKRSRTPDRERDRDRDRKSSPSK. Residues 1–244 form a disordered region; the sequence is MAGELADKKD…QKIREEKDKS (244 aa). Phosphoserine is present on residues Ser-14 and Ser-16. Residues 43–65 are compositionally biased toward basic residues; it reads DRKRHRSRDRRRGGSRSRSRSRS. The segment covering 66-105 has biased composition (basic and acidic residues); sequence KSAERERRHKERERDKERDRNKKDRDRDKDGHRRDKDRKR. Phosphoserine is present on residues Ser-107 and Ser-109. 3 stretches are compositionally biased toward basic and acidic residues: residues 112-137, 147-226, and 233-244; these read RGKD…DKKP, LLAK…RETN, and GRQKIREEKDKS. Residues 391–419 carry the Q motif motif; the sequence is RSWKDSSLPPHILEVIDKCGYKEPTPIQR. Residues 422 to 627 form the Helicase ATP-binding domain; that stretch reads IPIGLQNRDI…RSYLRRPAVV (206 aa). 435-442 is an ATP binding site; that stretch reads AETGSGKT. A DEAD box motif is present at residues 549–552; it reads DEAD. Residues 651–799 form the Helicase C-terminal domain; that stretch reads KRKKLLAILE…SCPPELANHP (149 aa). Glycyl lysine isopeptide (Lys-Gly) (interchain with G-Cter in SUMO2) cross-links involve residues Lys-686 and Lys-811.

Belongs to the DEAD box helicase family. DDX23/PRP28 subfamily. In terms of assembly, the phosphorylated form (by SRPK2) is a component of the U4/U6-U5 tri-snRNP complex composed of the U4, U6 and U5 snRNAs and at least PRPF3, PRPF4, PRPF6, PRPF8, PRPF31, SNRNP200, TXNL4A, WDR57, SNRNP40, DDX23, CD2BP2, PPIH, SNU13, EFTUD2, SART1 and USP39. Identified in the spliceosome C complex. Interacts with ERBB4. Interacts with ERCC6. In vitro phosphorylated by CLK1 and U1 snRNP-associated protein kinase. Phosphorylated by SRPK2 and this phosphorylation is required for its association with the tri-snRNP (U4/U6-U5 tri-small nuclear ribonucleoproteins) and subsequent spliceosomal B complex formation. May be phosphorylated by SRPK2 on Ser residues in the SR domain; the phosphorylation is required for the removal of inappropriate R-loops during transcription.

It is found in the nucleus. It localises to the chromosome. It catalyses the reaction ATP + H2O = ADP + phosphate + H(+). Functionally, involved in pre-mRNA splicing and its phosphorylated form (by SRPK2) is required for spliceosomal B complex formation. Independently of its spliceosome formation function, required for the suppression of incorrect R-loops formed during transcription; R-loops are composed of a DNA:RNA hybrid and the associated non-template single-stranded DNA. This is Probable ATP-dependent RNA helicase DDX23 from Pongo abelii (Sumatran orangutan).